The following is a 500-amino-acid chain: Probable malate:quinone oxidoreductase (500 aa).

The protein belongs to the MQO family. Requires FAD as cofactor.

It catalyses the reaction (S)-malate + a quinone = a quinol + oxaloacetate. It functions in the pathway carbohydrate metabolism; tricarboxylic acid cycle; oxaloacetate from (S)-malate (quinone route): step 1/1. In Bordetella avium (strain 197N), this protein is Probable malate:quinone oxidoreductase.